A 156-amino-acid chain; its full sequence is 6,7-dimethyl-8-ribityllumazine synthase (156 aa).

5-amino-6-(D-ribitylamino)uracil-binding positions include phenylalanine 28, 62–64 (ALE), and 86–88 (AVI). Residue 91-92 (ET) coordinates (2S)-2-hydroxy-3-oxobutyl phosphate. Histidine 94 (proton donor) is an active-site residue. Asparagine 119 lines the 5-amino-6-(D-ribitylamino)uracil pocket. Arginine 133 is a binding site for (2S)-2-hydroxy-3-oxobutyl phosphate.

It belongs to the DMRL synthase family.

The catalysed reaction is (2S)-2-hydroxy-3-oxobutyl phosphate + 5-amino-6-(D-ribitylamino)uracil = 6,7-dimethyl-8-(1-D-ribityl)lumazine + phosphate + 2 H2O + H(+). It participates in cofactor biosynthesis; riboflavin biosynthesis; riboflavin from 2-hydroxy-3-oxobutyl phosphate and 5-amino-6-(D-ribitylamino)uracil: step 1/2. In terms of biological role, catalyzes the formation of 6,7-dimethyl-8-ribityllumazine by condensation of 5-amino-6-(D-ribitylamino)uracil with 3,4-dihydroxy-2-butanone 4-phosphate. This is the penultimate step in the biosynthesis of riboflavin. The protein is 6,7-dimethyl-8-ribityllumazine synthase of Azoarcus sp. (strain BH72).